Consider the following 502-residue polypeptide: ATP synthase subunit alpha (502 aa).

169–176 (GDKQTGKT) serves as a coordination point for ATP.

This sequence belongs to the ATPase alpha/beta chains family. F-type ATPases have 2 components, CF(1) - the catalytic core - and CF(0) - the membrane proton channel. CF(1) has five subunits: alpha(3), beta(3), gamma(1), delta(1), epsilon(1). CF(0) has three main subunits: a(1), b(2) and c(9-12). The alpha and beta chains form an alternating ring which encloses part of the gamma chain. CF(1) is attached to CF(0) by a central stalk formed by the gamma and epsilon chains, while a peripheral stalk is formed by the delta and b chains.

The protein localises to the cell membrane. The catalysed reaction is ATP + H2O + 4 H(+)(in) = ADP + phosphate + 5 H(+)(out). Its function is as follows. Produces ATP from ADP in the presence of a proton gradient across the membrane. The alpha chain is a regulatory subunit. This chain is ATP synthase subunit alpha, found in Lachnoclostridium phytofermentans (strain ATCC 700394 / DSM 18823 / ISDg) (Clostridium phytofermentans).